We begin with the raw amino-acid sequence, 111 residues long: Large ribosomal subunit protein uL22 (111 aa).

The protein belongs to the universal ribosomal protein uL22 family. In terms of assembly, part of the 50S ribosomal subunit.

Functionally, this protein binds specifically to 23S rRNA; its binding is stimulated by other ribosomal proteins, e.g. L4, L17, and L20. It is important during the early stages of 50S assembly. It makes multiple contacts with different domains of the 23S rRNA in the assembled 50S subunit and ribosome. In terms of biological role, the globular domain of the protein is located near the polypeptide exit tunnel on the outside of the subunit, while an extended beta-hairpin is found that lines the wall of the exit tunnel in the center of the 70S ribosome. The chain is Large ribosomal subunit protein uL22 from Xylella fastidiosa (strain 9a5c).